A 137-amino-acid chain; its full sequence is Nucleoside diphosphate kinase (137 aa).

Lysine 9, phenylalanine 57, arginine 85, threonine 91, arginine 102, and asparagine 112 together coordinate ATP. The active-site Pros-phosphohistidine intermediate is the histidine 115.

It belongs to the NDK family. Homotetramer. Requires Mg(2+) as cofactor.

The protein localises to the cytoplasm. It carries out the reaction a 2'-deoxyribonucleoside 5'-diphosphate + ATP = a 2'-deoxyribonucleoside 5'-triphosphate + ADP. The enzyme catalyses a ribonucleoside 5'-diphosphate + ATP = a ribonucleoside 5'-triphosphate + ADP. Major role in the synthesis of nucleoside triphosphates other than ATP. The ATP gamma phosphate is transferred to the NDP beta phosphate via a ping-pong mechanism, using a phosphorylated active-site intermediate. This chain is Nucleoside diphosphate kinase, found in Leptospira borgpetersenii serovar Hardjo-bovis (strain L550).